Here is a 441-residue protein sequence, read N- to C-terminus: Probable D-serine dehydratase (441 aa).

K117 carries the post-translational modification N6-(pyridoxal phosphate)lysine.

It belongs to the serine/threonine dehydratase family. DsdA subfamily. The cofactor is pyridoxal 5'-phosphate.

It catalyses the reaction D-serine = pyruvate + NH4(+). In Acinetobacter baylyi (strain ATCC 33305 / BD413 / ADP1), this protein is Probable D-serine dehydratase.